We begin with the raw amino-acid sequence, 426 residues long: Glutamyl-tRNA reductase (426 aa).

Substrate contacts are provided by residues 49-52 (TCNR), S109, 114-116 (EGQ), and Q120. Catalysis depends on C50, which acts as the Nucleophile. 189–194 (GAGETG) serves as a coordination point for NADP(+).

The protein belongs to the glutamyl-tRNA reductase family. As to quaternary structure, homodimer.

It carries out the reaction (S)-4-amino-5-oxopentanoate + tRNA(Glu) + NADP(+) = L-glutamyl-tRNA(Glu) + NADPH + H(+). It functions in the pathway porphyrin-containing compound metabolism; protoporphyrin-IX biosynthesis; 5-aminolevulinate from L-glutamyl-tRNA(Glu): step 1/2. Its pathway is porphyrin-containing compound metabolism; chlorophyll biosynthesis. In terms of biological role, catalyzes the NADPH-dependent reduction of glutamyl-tRNA(Glu) to glutamate 1-semialdehyde (GSA). The sequence is that of Glutamyl-tRNA reductase from Chlorobium phaeobacteroides (strain BS1).